Consider the following 285-residue polypeptide: Probable endonuclease 4 (285 aa).

Residues His-69, His-109, Glu-145, Asp-179, His-182, His-216, Asp-229, His-231, and Glu-261 each coordinate Zn(2+).

This sequence belongs to the AP endonuclease 2 family. The cofactor is Zn(2+).

It catalyses the reaction Endonucleolytic cleavage to 5'-phosphooligonucleotide end-products.. In terms of biological role, endonuclease IV plays a role in DNA repair. It cleaves phosphodiester bonds at apurinic or apyrimidinic (AP) sites, generating a 3'-hydroxyl group and a 5'-terminal sugar phosphate. The polypeptide is Probable endonuclease 4 (Enterobacter sp. (strain 638)).